The sequence spans 876 residues: DNA mismatch repair protein MutS (876 aa).

628 to 635 is a binding site for ATP; it reads GPNMAGKS.

Belongs to the DNA mismatch repair MutS family.

Its function is as follows. This protein is involved in the repair of mismatches in DNA. It is possible that it carries out the mismatch recognition step. This protein has a weak ATPase activity. The chain is DNA mismatch repair protein MutS from Chlorobaculum parvum (strain DSM 263 / NCIMB 8327) (Chlorobium vibrioforme subsp. thiosulfatophilum).